A 200-amino-acid polypeptide reads, in one-letter code: V-set and transmembrane domain-containing protein 5 (200 aa).

The N-terminal stretch at 1–28 (MRPLPSGRRKTRGISLGLFALCLAAARC) is a signal peptide. Residues 29-147 (LQSQGVSLYI…VSEILYEDLH (119 aa)) are Extracellular-facing. In terms of domain architecture, Ig-like C2-type spans 37–139 (YIPQATINAT…QFGTIVLHVS (103 aa)). N102 carries an N-linked (GlcNAc...) asparagine glycan. The chain crosses the membrane as a helical span at residues 148–168 (FVAVILAFLAAVAAVLISLMW). Topologically, residues 169-200 (VCNKCAYKFQRKRRHKLKESTTEEIELEDVEC) are cytoplasmic. The interval 170–186 (CNKCAYKFQRKRRHKLK) is important for CDC42-dependent filopodia induction.

As to quaternary structure, can homooligomerize through cis interactions within the same cell membrane. Post-translationally, N-glycosylated.

It localises to the cell membrane. The protein localises to the cell projection. The protein resides in the dendrite. It is found in the axon. In terms of biological role, cell adhesion-like membrane protein of the central nervous system (CNS) which modulates both the position and complexity of central neurons by altering their membrane morphology and dynamics. Involved in the formation of neuronal dendrites and protrusions including dendritic filopodia. In synaptogenesis, regulates synapse formation by altering dendritic spine morphology and actin distribution. Promotes formation of unstable neuronal spines such as thin and branched types. Regulates neuronal morphogenesis and migration during cortical development in the brain. The sequence is that of V-set and transmembrane domain-containing protein 5 (VSTM5) from Homo sapiens (Human).